A 270-amino-acid chain; its full sequence is Undecaprenyl-diphosphatase 2 (270 aa).

Helical transmembrane passes span methionine 1 to valine 21, glutamine 39 to phenylalanine 59, tryptophan 87 to isoleucine 107, proline 114 to valine 134, leucine 147 to threonine 167, phenylalanine 190 to leucine 210, alanine 221 to leucine 241, and valine 247 to phenylalanine 267.

The protein belongs to the UppP family.

It localises to the cell inner membrane. The enzyme catalyses di-trans,octa-cis-undecaprenyl diphosphate + H2O = di-trans,octa-cis-undecaprenyl phosphate + phosphate + H(+). Its function is as follows. Catalyzes the dephosphorylation of undecaprenyl diphosphate (UPP). Confers resistance to bacitracin. The protein is Undecaprenyl-diphosphatase 2 of Stutzerimonas stutzeri (strain A1501) (Pseudomonas stutzeri).